We begin with the raw amino-acid sequence, 546 residues long: Chaperonin GroEL 1 (546 aa).

ATP contacts are provided by residues 30–33 (TLGP), Lys51, 87–91 (DGTTT), Gly415, 479–481 (NAA), and Asp495. The segment at 526–546 (KEDAPMPGGMPGGMGGMGMDM) is disordered. The span at 534-546 (GMPGGMGGMGMDM) shows a compositional bias: gly residues.

Belongs to the chaperonin (HSP60) family. In terms of assembly, forms a cylinder of 14 subunits composed of two heptameric rings stacked back-to-back. Interacts with the co-chaperonin GroES.

Its subcellular location is the cytoplasm. It catalyses the reaction ATP + H2O + a folded polypeptide = ADP + phosphate + an unfolded polypeptide.. Its function is as follows. Together with its co-chaperonin GroES, plays an essential role in assisting protein folding. The GroEL-GroES system forms a nano-cage that allows encapsulation of the non-native substrate proteins and provides a physical environment optimized to promote and accelerate protein folding. The chain is Chaperonin GroEL 1 from Burkholderia vietnamiensis (strain G4 / LMG 22486) (Burkholderia cepacia (strain R1808)).